Consider the following 184-residue polypeptide: Homeobox protein LOX10 (184 aa).

Disordered stretches follow at residues K1–H29 and Y129–G184. Positions R76–K135 form a DNA-binding region, homeobox. Low complexity-rich tracts occupy residues N140–T161 and S174–G184.

This sequence belongs to the NK-2 homeobox family. As to expression, expressed in a segmental pattern in the endoderm and in the cephalic nervous system.

The protein resides in the nucleus. May play a role in patterning the gut. This chain is Homeobox protein LOX10 (LOX10), found in Helobdella triserialis (Leech).